Reading from the N-terminus, the 630-residue chain is uncharacterized protein (630 aa).

2 consecutive transmembrane segments (helical) span residues 8 to 28 (LFNM…ASAV) and 258 to 278 (VDNS…PLVI). The disordered stretch occupies residues 399–426 (EETSKPTEQPSPADSTSTPAAPEKGAAS). Residues 404–417 (PTEQPSPADSTSTP) are compositionally biased toward polar residues.

It belongs to the peptidase S1C family.

The protein resides in the cell membrane. This is an uncharacterized protein from Sinorhizobium fredii (strain NBRC 101917 / NGR234).